Reading from the N-terminus, the 136-residue chain is Small ribosomal subunit protein eS12 (136 aa).

The protein belongs to the eukaryotic ribosomal protein eS12 family.

The protein is Small ribosomal subunit protein eS12 (rps12) of Dictyostelium discoideum (Social amoeba).